The sequence spans 173 residues: Alpha-crystallin A chain (173 aa).

Met-1 is subject to N-acetylmethionine. The interval 1–63 (MDITIQHPWF…RTVLESGISE (63 aa)) is required for complex formation with BFSP1 and BFSP2. Gln-6 carries the deamidated glutamine; partial modification. Ser-45 carries the phosphoserine modification. Gln-50 carries the post-translational modification Deamidated glutamine; partial. One can recognise a sHSP domain in the interval 52-164 (LFRTVLESGI…SDRSIPVSRE (113 aa)). Residue Lys-99 is modified to N6-acetyllysine. The Zn(2+) site is built by His-100, Glu-102, and His-107. The residue at position 122 (Ser-122) is a Phosphoserine. At Asn-123 the chain carries Deamidated asparagine; partial. The disordered stretch occupies residues 144–173 (PKIHSNMESSHSDRSIPVSREEKPTLAPSS). Over residues 153 to 167 (SHSDRSIPVSREEKP) the composition is skewed to basic and acidic residues. Residue His-154 coordinates Zn(2+). The O-linked (GlcNAc) serine glycan is linked to Ser-162.

This sequence belongs to the small heat shock protein (HSP20) family. Heteromer composed of three CRYAA and one CRYAB subunits. Inter-subunit bridging via zinc ions enhances stability, which is crucial as there is no protein turn over in the lens. Can also form homodimers and homotetramers (dimers of dimers) which serve as the building blocks of homooligomers. Within homooligomers, the zinc-binding motif is created from residues of 3 different molecules. His-100 and Glu-102 from one molecule are ligands of the zinc ion, and His-107 and His-154 residues from additional molecules complete the site with tetrahedral coordination geometry. Part of a complex required for lens intermediate filament formation composed of BFSP1, BFSP2 and CRYAA. Acetylation at Lys-99 may increase chaperone activity. Post-translationally, undergoes age-dependent proteolytical cleavage at the C-terminus.

The protein localises to the cytoplasm. It localises to the nucleus. Contributes to the transparency and refractive index of the lens. Acts as a chaperone, preventing aggregation of various proteins under a wide range of stress conditions. Required for the correct formation of lens intermediate filaments as part of a complex composed of BFSP1, BFSP2 and CRYAA. The chain is Alpha-crystallin A chain (CRYAA) from Didelphis virginiana (North American opossum).